A 260-amino-acid polypeptide reads, in one-letter code: Ribosomal RNA small subunit methyltransferase J (260 aa).

S-adenosyl-L-methionine is bound by residues 125-126 (ER) and Asp179.

This sequence belongs to the methyltransferase superfamily. RsmJ family.

The protein resides in the cytoplasm. It catalyses the reaction guanosine(1516) in 16S rRNA + S-adenosyl-L-methionine = N(2)-methylguanosine(1516) in 16S rRNA + S-adenosyl-L-homocysteine + H(+). In terms of biological role, specifically methylates the guanosine in position 1516 of 16S rRNA. The polypeptide is Ribosomal RNA small subunit methyltransferase J (Pseudomonas entomophila (strain L48)).